The chain runs to 46 residues: Elongation factor Tu (46 aa).

Over residues 1 to 10 (MAKGKFERSK) the composition is skewed to basic and acidic residues. Positions 1–20 (MAKGKFERSKPHVNVGTIGH) are disordered. 19–26 (GHVDHGKT) contacts GTP.

It belongs to the GTP-binding elongation factor family. EF-Tu/EF-1A subfamily. As to quaternary structure, monomer.

It localises to the cytoplasm. This protein promotes the GTP-dependent binding of aminoacyl-tRNA to the A-site of ribosomes during protein biosynthesis. The protein is Elongation factor Tu (tufA) of Eikenella corrodens.